The chain runs to 243 residues: Probable phosphatase CLD_1129 (243 aa).

His8, His10, His16, His41, Glu74, His102, His132, Asp192, and His194 together coordinate Zn(2+).

It belongs to the PHP family. Zn(2+) is required as a cofactor.

The protein is Probable phosphatase CLD_1129 of Clostridium botulinum (strain Okra / Type B1).